Reading from the N-terminus, the 371-residue chain is UDP-N-acetylglucosamine--N-acetylmuramyl-(pentapeptide) pyrophosphoryl-undecaprenol N-acetylglucosamine transferase (371 aa).

UDP-N-acetyl-alpha-D-glucosamine-binding positions include 15-17, Asn126, Arg172, Ser199, Ile256, 275-280, and Gln301; these read TGG and ALTVSE.

The protein belongs to the glycosyltransferase 28 family. MurG subfamily.

The protein localises to the cell inner membrane. It catalyses the reaction di-trans,octa-cis-undecaprenyl diphospho-N-acetyl-alpha-D-muramoyl-L-alanyl-D-glutamyl-meso-2,6-diaminopimeloyl-D-alanyl-D-alanine + UDP-N-acetyl-alpha-D-glucosamine = di-trans,octa-cis-undecaprenyl diphospho-[N-acetyl-alpha-D-glucosaminyl-(1-&gt;4)]-N-acetyl-alpha-D-muramoyl-L-alanyl-D-glutamyl-meso-2,6-diaminopimeloyl-D-alanyl-D-alanine + UDP + H(+). It functions in the pathway cell wall biogenesis; peptidoglycan biosynthesis. Cell wall formation. Catalyzes the transfer of a GlcNAc subunit on undecaprenyl-pyrophosphoryl-MurNAc-pentapeptide (lipid intermediate I) to form undecaprenyl-pyrophosphoryl-MurNAc-(pentapeptide)GlcNAc (lipid intermediate II). The sequence is that of UDP-N-acetylglucosamine--N-acetylmuramyl-(pentapeptide) pyrophosphoryl-undecaprenol N-acetylglucosamine transferase from Francisella tularensis subsp. holarctica (strain FTNF002-00 / FTA).